We begin with the raw amino-acid sequence, 120 residues long: Ribosome-binding factor A (120 aa).

It belongs to the RbfA family. Monomer. Binds 30S ribosomal subunits, but not 50S ribosomal subunits or 70S ribosomes.

Its subcellular location is the cytoplasm. One of several proteins that assist in the late maturation steps of the functional core of the 30S ribosomal subunit. Associates with free 30S ribosomal subunits (but not with 30S subunits that are part of 70S ribosomes or polysomes). Required for efficient processing of 16S rRNA. May interact with the 5'-terminal helix region of 16S rRNA. The polypeptide is Ribosome-binding factor A (Borrelia garinii subsp. bavariensis (strain ATCC BAA-2496 / DSM 23469 / PBi) (Borreliella bavariensis)).